The sequence spans 292 residues: MAVPTELHGGSVKETAAEKESRVLEPGAAPFGNFPHYSRFHPPEQRLRLLPPELLRQLFPESPENGPILGLDVGCNSGDLSVALYKHFLSLPDGKTCSDASREFRLLCCDIDPVLVKRAEKECPFPDALTFITLDFMNQRTRKVLLSSFLSQFGRSVFDIGFCMSITMWIHLNHGDHGLWEFLARLSSLCRYLLVEPQPWKCYRAAARRLRKLGLHDFDHFHSLTIRGDMPNQIVQILTQDHGMELICCFGNTSWDRSLLLFRAKQTIETHPIPESLIEKGKEKNRLSFQKQ.

A disordered region spans residues 1–20 (MAVPTELHGGSVKETAAEKE). S-adenosyl-L-methionine is bound by residues Arg46, Asn76, Asp110, 135–136 (DF), and Met164. The region spanning 53 to 274 (ELLRQLFPES…KQTIETHPIP (222 aa)) is the Bin3-type SAM domain.

Belongs to the methyltransferase superfamily. In terms of assembly, interacts with DICER1; the interaction may be mediated by RNA.

The protein localises to the cytoplasm. The catalysed reaction is a 5'-end 5'-phospho-ribonucleoside-RNA + S-adenosyl-L-methionine = a 5'-end (5'-methylphospho)-ribonucleoside-RNA + S-adenosyl-L-homocysteine. It catalyses the reaction a 5'-end 5'-phospho-ribonucleoside-RNA + 2 S-adenosyl-L-methionine = a 5'-end (5'-bismethylphospho)-ribonucleoside-RNA + 2 S-adenosyl-L-homocysteine. In terms of biological role, O-methyltransferase that specifically monomethylates 5'-monophosphate of cytoplasmic histidyl tRNA (tRNA(His)), acting as a capping enzyme by protecting tRNA(His) from cleavage by DICER1. Also able, with less efficiently, to methylate the 5' monophosphate of a subset of pre-miRNAs, acting as a negative regulator of miRNA processing. The 5' monophosphate of pre-miRNAs is recognized by DICER1 and is required for pre-miRNAs processing: methylation at this position reduces the processing of pre-miRNAs by DICER1. Was also reported to mediate dimethylation of pre-miR-145; however dimethylation cannot be reproduced by another group which observes a monomethylation of pre-miR-145. This chain is RNA 5'-monophosphate methyltransferase (BCDIN3D), found in Pongo abelii (Sumatran orangutan).